The chain runs to 140 residues: Large-conductance mechanosensitive channel (140 aa).

A run of 2 helical transmembrane segments spans residues valine 14–leucine 34 and glycine 85–valine 105.

This sequence belongs to the MscL family. Homopentamer.

The protein localises to the cell inner membrane. Functionally, channel that opens in response to stretch forces in the membrane lipid bilayer. May participate in the regulation of osmotic pressure changes within the cell. In Sphingopyxis alaskensis (strain DSM 13593 / LMG 18877 / RB2256) (Sphingomonas alaskensis), this protein is Large-conductance mechanosensitive channel.